A 304-amino-acid polypeptide reads, in one-letter code: UDP-3-O-acyl-N-acetylglucosamine deacetylase (304 aa).

3 residues coordinate Zn(2+): His78, His237, and Asp241. His264 acts as the Proton donor in catalysis.

The protein belongs to the LpxC family. It depends on Zn(2+) as a cofactor.

It catalyses the reaction a UDP-3-O-[(3R)-3-hydroxyacyl]-N-acetyl-alpha-D-glucosamine + H2O = a UDP-3-O-[(3R)-3-hydroxyacyl]-alpha-D-glucosamine + acetate. It functions in the pathway glycolipid biosynthesis; lipid IV(A) biosynthesis; lipid IV(A) from (3R)-3-hydroxytetradecanoyl-[acyl-carrier-protein] and UDP-N-acetyl-alpha-D-glucosamine: step 2/6. Its function is as follows. Catalyzes the hydrolysis of UDP-3-O-myristoyl-N-acetylglucosamine to form UDP-3-O-myristoylglucosamine and acetate, the committed step in lipid A biosynthesis. This chain is UDP-3-O-acyl-N-acetylglucosamine deacetylase, found in Methylococcus capsulatus (strain ATCC 33009 / NCIMB 11132 / Bath).